We begin with the raw amino-acid sequence, 294 residues long: 4-hydroxy-tetrahydrodipicolinate synthase (294 aa).

T45 lines the pyruvate pocket. Y133 serves as the catalytic Proton donor/acceptor. K162 (schiff-base intermediate with substrate) is an active-site residue. Pyruvate is bound at residue V204.

It belongs to the DapA family. As to quaternary structure, homotetramer; dimer of dimers.

It localises to the cytoplasm. It carries out the reaction L-aspartate 4-semialdehyde + pyruvate = (2S,4S)-4-hydroxy-2,3,4,5-tetrahydrodipicolinate + H2O + H(+). It participates in amino-acid biosynthesis; L-lysine biosynthesis via DAP pathway; (S)-tetrahydrodipicolinate from L-aspartate: step 3/4. In terms of biological role, catalyzes the condensation of (S)-aspartate-beta-semialdehyde [(S)-ASA] and pyruvate to 4-hydroxy-tetrahydrodipicolinate (HTPA). The chain is 4-hydroxy-tetrahydrodipicolinate synthase from Bartonella bacilliformis (strain ATCC 35685 / KC583 / Herrer 020/F12,63).